Here is a 215-residue protein sequence, read N- to C-terminus: Large ribosomal subunit protein bL25 (215 aa).

Residues 192–203 (EEATEEEEEAAE) show a composition bias toward acidic residues. The segment at 192-215 (EEATEEEEEAAEPEVIKRKEEEEE) is disordered. Over residues 205–215 (EVIKRKEEEEE) the composition is skewed to basic and acidic residues.

The protein belongs to the bacterial ribosomal protein bL25 family. CTC subfamily. In terms of assembly, part of the 50S ribosomal subunit; part of the 5S rRNA/L5/L18/L25 subcomplex. Contacts the 5S rRNA. Binds to the 5S rRNA independently of L5 and L18.

Its function is as follows. This is one of the proteins that binds to the 5S RNA in the ribosome where it forms part of the central protuberance. This chain is Large ribosomal subunit protein bL25, found in Thermotoga sp. (strain RQ2).